A 412-amino-acid polypeptide reads, in one-letter code: D-nopaline dehydrogenase (412 aa).

The protein belongs to the lysopine/nopaline/octopine/opine/vitopine dehydrogenases family. In terms of assembly, homotetramer.

It catalyses the reaction D-nopaline + NADP(+) + H2O = L-arginine + 2-oxoglutarate + NADPH + H(+). The sequence is that of D-nopaline dehydrogenase (nos) from Agrobacterium vitis (Rhizobium vitis).